Consider the following 363-residue polypeptide: Ribosomal RNA large subunit methyltransferase M (363 aa).

S-adenosyl-L-methionine-binding positions include serine 190, 223 to 226 (CPGG), aspartate 242, aspartate 262, and aspartate 280. Lysine 309 acts as the Proton acceptor in catalysis.

This sequence belongs to the class I-like SAM-binding methyltransferase superfamily. RNA methyltransferase RlmE family. RlmM subfamily. As to quaternary structure, monomer.

Its subcellular location is the cytoplasm. It carries out the reaction cytidine(2498) in 23S rRNA + S-adenosyl-L-methionine = 2'-O-methylcytidine(2498) in 23S rRNA + S-adenosyl-L-homocysteine + H(+). Catalyzes the 2'-O-methylation at nucleotide C2498 in 23S rRNA. The chain is Ribosomal RNA large subunit methyltransferase M from Actinobacillus pleuropneumoniae serotype 5b (strain L20).